A 255-amino-acid chain; its full sequence is Ribosomal RNA small subunit methyltransferase J (255 aa).

Residues 107–108 (RD), 123–124 (ER), and D178 each bind S-adenosyl-L-methionine. The tract at residues 228–247 (ARAEPLSGRKPSHQIPGKTT) is disordered.

It belongs to the methyltransferase superfamily. RsmJ family.

Its subcellular location is the cytoplasm. The enzyme catalyses guanosine(1516) in 16S rRNA + S-adenosyl-L-methionine = N(2)-methylguanosine(1516) in 16S rRNA + S-adenosyl-L-homocysteine + H(+). In terms of biological role, specifically methylates the guanosine in position 1516 of 16S rRNA. The polypeptide is Ribosomal RNA small subunit methyltransferase J (Thioalkalivibrio sulfidiphilus (strain HL-EbGR7)).